The primary structure comprises 66 residues: Large ribosomal subunit protein uL29 (66 aa).

The protein belongs to the universal ribosomal protein uL29 family.

This is Large ribosomal subunit protein uL29 from Rhizobium leguminosarum bv. trifolii (strain WSM2304).